We begin with the raw amino-acid sequence, 213 residues long: uncharacterized protein (213 aa).

This is an uncharacterized protein from Homo sapiens (Human).